Reading from the N-terminus, the 314-residue chain is Probable cell division protein WhiA (314 aa).

The H-T-H motif DNA-binding region spans 275–309 (SLKELGELVTSGAISKSGVNHRLKKIDEFAEKIKR).

This sequence belongs to the WhiA family.

In terms of biological role, involved in cell division and chromosome segregation. The sequence is that of Probable cell division protein WhiA from Oceanobacillus iheyensis (strain DSM 14371 / CIP 107618 / JCM 11309 / KCTC 3954 / HTE831).